The sequence spans 280 residues: MAFSGHHARKRFAQHWLIDAAVLTQILDAADVQPDDRLLEVGPGRGALTERLLASSASAVHAVELDRDLVSGLKQRFADQARFSLQEGDVLSVPLTLADGRAATKVVANIPYNITGPLLERLLGRLDRPVDHPYQRLVLLLQKEVAQRIRALPGQSCFSALSVRLQLLARCTTVCPVPPRSFKPPPKVHSEVILIEPLAPEQRLEPLLAKRVESLLRQAFLARRKMLRNTLAKVLPAAELNALADDLGISLQQRPQELSPATWVELARGLNRADLVDPEP.

His15, Leu17, Gly42, Glu64, Asp89, and Asn109 together coordinate S-adenosyl-L-methionine.

This sequence belongs to the class I-like SAM-binding methyltransferase superfamily. rRNA adenine N(6)-methyltransferase family. RsmA subfamily.

The protein localises to the cytoplasm. It catalyses the reaction adenosine(1518)/adenosine(1519) in 16S rRNA + 4 S-adenosyl-L-methionine = N(6)-dimethyladenosine(1518)/N(6)-dimethyladenosine(1519) in 16S rRNA + 4 S-adenosyl-L-homocysteine + 4 H(+). Functionally, specifically dimethylates two adjacent adenosines (A1518 and A1519) in the loop of a conserved hairpin near the 3'-end of 16S rRNA in the 30S particle. May play a critical role in biogenesis of 30S subunits. In Prochlorococcus marinus (strain MIT 9313), this protein is Ribosomal RNA small subunit methyltransferase A.